A 537-amino-acid polypeptide reads, in one-letter code: Cytochrome P450 27C1 (537 aa).

Cys483 contacts heme.

This sequence belongs to the cytochrome P450 family. The cofactor is heme. As to expression, expressed in the dorsal third of retinal pigment epithelium, but not in the ventral counterpart (at protein level).

Its subcellular location is the membrane. It carries out the reaction all-trans-retinol + 2 reduced [adrenodoxin] + O2 + 2 H(+) = all-trans-3,4-didehydroretinol + 2 oxidized [adrenodoxin] + 2 H2O. Its function is as follows. Efficiently catalyzes the conversion of all-trans retinol (also called vitamin A1, the precursor of 11-cis retinal) to 3,4-didehydroretinol (also called vitamin A2, the precursor of 11-cis 3,4-didehydroretinal), also acts on all-trans retinal and all-trans retinoic acid. The replacement of 11-cis retinal chromophore in photopigments with 11-cis 3,4-didehydroretinal enhances sensitivity to long-wavelength light. This may improve vision in fresh water which is often turbid. This chain is Cytochrome P450 27C1 (cyp27c1), found in Aquarana catesbeiana (American bullfrog).